The primary structure comprises 163 residues: Nucleotide-binding protein BA_1166 (163 aa).

Belongs to the YajQ family.

In terms of biological role, nucleotide-binding protein. The sequence is that of Nucleotide-binding protein BA_1166 from Bacillus anthracis.